The sequence spans 408 residues: Phosphoglycerate kinase (408 aa).

Substrate is bound by residues 24 to 26 (DLN), R39, 62 to 65 (HLGR), R121, and R161. ATP-binding positions include K211, G307, E338, and 364–367 (GGDS).

The protein belongs to the phosphoglycerate kinase family. As to quaternary structure, monomer.

It is found in the cytoplasm. The enzyme catalyses (2R)-3-phosphoglycerate + ATP = (2R)-3-phospho-glyceroyl phosphate + ADP. The protein operates within carbohydrate degradation; glycolysis; pyruvate from D-glyceraldehyde 3-phosphate: step 2/5. This is Phosphoglycerate kinase from Pseudarthrobacter chlorophenolicus (strain ATCC 700700 / DSM 12829 / CIP 107037 / JCM 12360 / KCTC 9906 / NCIMB 13794 / A6) (Arthrobacter chlorophenolicus).